A 420-amino-acid chain; its full sequence is Glucose-1-phosphate adenylyltransferase (420 aa).

Residues tyrosine 107, glycine 172, 187 to 188 (EK), and serine 205 each bind alpha-D-glucose 1-phosphate.

This sequence belongs to the bacterial/plant glucose-1-phosphate adenylyltransferase family. In terms of assembly, homotetramer.

It catalyses the reaction alpha-D-glucose 1-phosphate + ATP + H(+) = ADP-alpha-D-glucose + diphosphate. Its pathway is glycan biosynthesis; glycogen biosynthesis. Functionally, involved in the biosynthesis of ADP-glucose, a building block required for the elongation reactions to produce glycogen. Catalyzes the reaction between ATP and alpha-D-glucose 1-phosphate (G1P) to produce pyrophosphate and ADP-Glc. This Rhizobium leguminosarum bv. trifolii (strain WSM2304) protein is Glucose-1-phosphate adenylyltransferase.